Consider the following 684-residue polypeptide: Glycine--tRNA ligase beta subunit (684 aa).

It belongs to the class-II aminoacyl-tRNA synthetase family. In terms of assembly, tetramer of two alpha and two beta subunits.

Its subcellular location is the cytoplasm. The catalysed reaction is tRNA(Gly) + glycine + ATP = glycyl-tRNA(Gly) + AMP + diphosphate. The protein is Glycine--tRNA ligase beta subunit of Pseudomonas aeruginosa (strain LESB58).